The following is a 546-amino-acid chain: Probable sucrose-6-phosphate hydrolase (546 aa).

Substrate contacts are provided by residues 105 to 108 (LLND), glutamine 124, 167 to 168 (FS), 228 to 229 (RD), and glutamate 283. Aspartate 108 is a catalytic residue.

This sequence belongs to the glycosyl hydrolase 32 family.

The protein resides in the cytoplasm. The catalysed reaction is Hydrolysis of terminal non-reducing beta-D-fructofuranoside residues in beta-D-fructofuranosides.. The protein operates within glycan biosynthesis; sucrose metabolism. Functionally, enables the bacterium to metabolize sucrose as a sole carbon source. This chain is Probable sucrose-6-phosphate hydrolase, found in Vibrio cholerae.